The chain runs to 425 residues: Glutamyl-tRNA(Gln) amidotransferase subunit D (425 aa).

The disordered stretch occupies residues 53–84 (ENNGEAANGGNGGKNGQKEPEPAKEKVSKPGL). Over residues 68–80 (GQKEPEPAKEKVS) the composition is skewed to basic and acidic residues. One can recognise an Asparaginase/glutaminase domain in the interval 85 to 414 (PKVSILSTGG…EKAVSMLGEN (330 aa)). Active-site residues include Thr-95, Thr-171, Asp-172, and Lys-248.

This sequence belongs to the asparaginase 1 family. GatD subfamily. As to quaternary structure, heterodimer of GatD and GatE.

It catalyses the reaction L-glutamyl-tRNA(Gln) + L-glutamine + ATP + H2O = L-glutaminyl-tRNA(Gln) + L-glutamate + ADP + phosphate + H(+). Its function is as follows. Allows the formation of correctly charged Gln-tRNA(Gln) through the transamidation of misacylated Glu-tRNA(Gln) in organisms which lack glutaminyl-tRNA synthetase. The reaction takes place in the presence of glutamine and ATP through an activated gamma-phospho-Glu-tRNA(Gln). The GatDE system is specific for glutamate and does not act on aspartate. The chain is Glutamyl-tRNA(Gln) amidotransferase subunit D from Methanosarcina mazei (strain ATCC BAA-159 / DSM 3647 / Goe1 / Go1 / JCM 11833 / OCM 88) (Methanosarcina frisia).